The sequence spans 531 residues: Transporter mfs1 (531 aa).

The next 10 helical transmembrane spans lie at 83 to 103 (LVVT…SAIF), 119 to 139 (VPVI…PLIF), 158 to 178 (LIVF…GVLL), 182 to 202 (FLAG…LADI), 214 to 234 (FWSL…AAMV), 241 to 261 (WQFW…TFFM), 325 to 345 (IYIG…PILF), 358 to 378 (LVYM…FIYL), 398 to 418 (ILII…WFGW), and 424 to 444 (VHWI…FLLF). N-linked (GlcNAc...) asparagine glycosylation occurs at N486. The helical transmembrane segment at 496-516 (GWGSTILGVISCIMIPIPFLI) threads the bilayer.

This sequence belongs to the major facilitator superfamily. CAR1 family.

The protein resides in the endoplasmic reticulum. It is found in the membrane. In Schizosaccharomyces pombe (strain 972 / ATCC 24843) (Fission yeast), this protein is Transporter mfs1 (mfs1).